A 153-amino-acid chain; its full sequence is Nascent polypeptide-associated complex subunit beta (153 aa).

Disordered stretches follow at residues 1–40 (MSDV…ADDK) and 126–153 (LQKE…PKVE). Residues 23 to 32 (TPRRKVKRAP) are compositionally biased toward basic residues. The NAC-A/B domain occupies 36-101 (GADDKKLQLA…GEDKELTELV (66 aa)). Residues 132–147 (EDDDEIPDLVEGENFE) show a composition bias toward acidic residues.

This sequence belongs to the NAC-beta family. As to quaternary structure, part of the nascent polypeptide-associated complex (NAC), consisting of EGD2 and EGD1. NAC associates with ribosomes via EGD1.

It localises to the cytoplasm. The protein localises to the nucleus. Functionally, component of the nascent polypeptide-associated complex (NAC), a dynamic component of the ribosomal exit tunnel, protecting the emerging polypeptides from interaction with other cytoplasmic proteins to ensure appropriate nascent protein targeting. The NAC complex also promotes mitochondrial protein import by enhancing productive ribosome interactions with the outer mitochondrial membrane and blocks the inappropriate interaction of ribosomes translating non-secretory nascent polypeptides with translocation sites in the membrane of the endoplasmic reticulum. EGD1 may act as a transcription factor that exert a negative effect on the expression of several genes that are transcribed by RNA polymerase II. This is Nascent polypeptide-associated complex subunit beta (EGD1) from Gibberella zeae (strain ATCC MYA-4620 / CBS 123657 / FGSC 9075 / NRRL 31084 / PH-1) (Wheat head blight fungus).